The primary structure comprises 505 residues: Deoxyguanosinetriphosphate triphosphohydrolase (505 aa).

The HD domain occupies 66 to 273 (RLTHSMEVQQ…MEAADDISYC (208 aa)).

Belongs to the dGTPase family. Type 1 subfamily. In terms of assembly, homotetramer. Requires Mg(2+) as cofactor.

The catalysed reaction is dGTP + H2O = 2'-deoxyguanosine + triphosphate + H(+). DGTPase preferentially hydrolyzes dGTP over the other canonical NTPs. The sequence is that of Deoxyguanosinetriphosphate triphosphohydrolase from Salmonella schwarzengrund (strain CVM19633).